Consider the following 426-residue polypeptide: Transcription termination factor Rho (426 aa).

Positions 58 to 131 (QSLARGYLDI…VRVEAVNGLD (74 aa)) constitute a Rho RNA-BD domain. ATP is bound by residues 176-181 (GRGQRA), 188-193 (KAGKTT), and arginine 219.

The protein belongs to the Rho family. Homohexamer. The homohexamer assembles into an open ring structure.

Its function is as follows. Facilitates transcription termination by a mechanism that involves Rho binding to the nascent RNA, activation of Rho's RNA-dependent ATPase activity, and release of the mRNA from the DNA template. The polypeptide is Transcription termination factor Rho (Deinococcus radiodurans (strain ATCC 13939 / DSM 20539 / JCM 16871 / CCUG 27074 / LMG 4051 / NBRC 15346 / NCIMB 9279 / VKM B-1422 / R1)).